We begin with the raw amino-acid sequence, 296 residues long: Cytidine deaminase (296 aa).

CMP/dCMP-type deaminase domains lie at 47–167 and 186–296; these read TEAE…FGPK and DSSD…VDPV. 88-90 contributes to the substrate binding site; that stretch reads NLE. Histidine 101 is a binding site for Zn(2+). Catalysis depends on glutamate 103, which acts as the Proton donor. 2 residues coordinate Zn(2+): cysteine 128 and cysteine 131.

The protein belongs to the cytidine and deoxycytidylate deaminase family. Homodimer. Zn(2+) serves as cofactor.

The enzyme catalyses cytidine + H2O + H(+) = uridine + NH4(+). It carries out the reaction 2'-deoxycytidine + H2O + H(+) = 2'-deoxyuridine + NH4(+). In terms of biological role, this enzyme scavenges exogenous and endogenous cytidine and 2'-deoxycytidine for UMP synthesis. In Shewanella sp. (strain W3-18-1), this protein is Cytidine deaminase.